Reading from the N-terminus, the 474-residue chain is MLRIAILGRPNVGKSSLFNRMCKRSLAIVNSQEGTTRDRLYGEIRGWGIPVQVIDTGGVDKDSEDHFQKHIYKQALAGANEADILLLVIDIRCGITELDAEIAKQLLYLKKPLILVANKADTLKDEYRVHELYKIGISEIVTVSASHDKHIDKLIHKIKTLANVPEVVEEPREEMHEEEVPGMEFPETKEFLSDDEDEDTAFSQSSVADKPLKIALIGRPNVGKSSIINALLNEERCIIDNVPGTTRDNIDILYSHNDRSYLFIDTAGLRKMKSVKNSIEWISSSRTEKAIARADICLLVIDATHHLSSYDKRILSLISKQKKPHIILVNKWDLIEGVRMEHYIRDLRATDMYIGQSKILCISAATKRNLRQIFSSIDELHTTVSSKVPTPVVNKTLALALQKHHPQVINGRRLRVYYAIHKTATPFQFLLFINAKSLLTKHYECYLKNTLKSAFNLYGVPFDLEFKEKTKRTN.

EngA-type G domains follow at residues 2–166 (LRIA…NVPE) and 212–385 (LKIA…TTVS). Residues 8-15 (GRPNVGKS), 55-59 (DTGGV), 118-121 (NKAD), 218-225 (GRPNVGKS), 265-269 (DTAGL), and 330-333 (NKWD) contribute to the GTP site. In terms of domain architecture, KH-like spans 386 to 470 (SKVPTPVVNK…PFDLEFKEKT (85 aa)).

The protein belongs to the TRAFAC class TrmE-Era-EngA-EngB-Septin-like GTPase superfamily. EngA (Der) GTPase family. Associates with the 50S ribosomal subunit.

GTPase that plays an essential role in the late steps of ribosome biogenesis. In Chlamydia abortus (strain DSM 27085 / S26/3) (Chlamydophila abortus), this protein is GTPase Der.